The chain runs to 285 residues: Bifunctional protein FolD (285 aa).

Residues 166–168 (GAS), serine 191, and isoleucine 232 contribute to the NADP(+) site.

Belongs to the tetrahydrofolate dehydrogenase/cyclohydrolase family. Homodimer.

It carries out the reaction (6R)-5,10-methylene-5,6,7,8-tetrahydrofolate + NADP(+) = (6R)-5,10-methenyltetrahydrofolate + NADPH. It catalyses the reaction (6R)-5,10-methenyltetrahydrofolate + H2O = (6R)-10-formyltetrahydrofolate + H(+). The protein operates within one-carbon metabolism; tetrahydrofolate interconversion. Its function is as follows. Catalyzes the oxidation of 5,10-methylenetetrahydrofolate to 5,10-methenyltetrahydrofolate and then the hydrolysis of 5,10-methenyltetrahydrofolate to 10-formyltetrahydrofolate. The protein is Bifunctional protein FolD of Edwardsiella ictaluri (strain 93-146).